Consider the following 324-residue polypeptide: Acetyl-coenzyme A carboxylase carboxyl transferase subunit beta (324 aa).

Over residues 1–16 (MTKNNNDLSNSSSNPP) the composition is skewed to low complexity. Positions 1–51 (MTKNNNDLSNSSSNPPSNRPVAGKEAELEIQRETHAAQSGQSESWLSRPIP) are disordered. The segment covering 22 to 35 (AGKEAELEIQRETH) has biased composition (basic and acidic residues). A compositionally biased stretch (polar residues) spans 36-45 (AAQSGQSESW). Residues 68–324 (PSTECPQCHS…YRLLAKLTHV (257 aa)) enclose the CoA carboxyltransferase N-terminal domain. 4 residues coordinate Zn(2+): C72, C75, C91, and C94. Residues 72–94 (CPQCHSMITNTALIFNAYVCPHC) form a C4-type zinc finger.

Belongs to the AccD/PCCB family. Acetyl-CoA carboxylase is a heterohexamer composed of biotin carboxyl carrier protein (AccB), biotin carboxylase (AccC) and two subunits each of ACCase subunit alpha (AccA) and ACCase subunit beta (AccD). Zn(2+) serves as cofactor.

The protein resides in the cytoplasm. It catalyses the reaction N(6)-carboxybiotinyl-L-lysyl-[protein] + acetyl-CoA = N(6)-biotinyl-L-lysyl-[protein] + malonyl-CoA. It functions in the pathway lipid metabolism; malonyl-CoA biosynthesis; malonyl-CoA from acetyl-CoA: step 1/1. In terms of biological role, component of the acetyl coenzyme A carboxylase (ACC) complex. Biotin carboxylase (BC) catalyzes the carboxylation of biotin on its carrier protein (BCCP) and then the CO(2) group is transferred by the transcarboxylase to acetyl-CoA to form malonyl-CoA. This is Acetyl-coenzyme A carboxylase carboxyl transferase subunit beta from Psychrobacter sp. (strain PRwf-1).